We begin with the raw amino-acid sequence, 78 residues long: Acyl carrier protein AcpP (78 aa).

Positions 2-77 constitute a Carrier domain; it reads SDIAERVKKI…DAVKFIEKAQ (76 aa). Serine 37 is subject to O-(pantetheine 4'-phosphoryl)serine.

Belongs to the acyl carrier protein (ACP) family. 4'-phosphopantetheine is transferred from CoA to a specific serine of apo-ACP by AcpS. This modification is essential for activity because fatty acids are bound in thioester linkage to the sulfhydryl of the prosthetic group.

It is found in the cytoplasm. The protein operates within lipid metabolism; fatty acid biosynthesis. In terms of biological role, carrier of the growing fatty acid chain in fatty acid biosynthesis. The polypeptide is Acyl carrier protein AcpP (Agrobacterium fabrum (strain C58 / ATCC 33970) (Agrobacterium tumefaciens (strain C58))).